An 892-amino-acid polypeptide reads, in one-letter code: Translation initiation factor IF-2 (892 aa).

The span at 165 to 175 shows a compositional bias: basic and acidic residues; the sequence is EEQAELERQKT. Disordered regions lie at residues 165 to 250 and 264 to 300; these read EEQA…EDDS and ERAR…AHGF. The segment covering 208-222 has biased composition (low complexity); it reads PRAVRPAPAARPSVS. A tr-type G domain is found at 391 to 560; it reads PRPPVVTIMG…SIQAEVLELK (170 aa). GTP-binding positions include 400-407, 446-450, and 500-503; these read GHVDHGKT, DTPGH, and SKID.

Belongs to the TRAFAC class translation factor GTPase superfamily. Classic translation factor GTPase family. IF-2 subfamily.

It localises to the cytoplasm. In terms of biological role, one of the essential components for the initiation of protein synthesis. Protects formylmethionyl-tRNA from spontaneous hydrolysis and promotes its binding to the 30S ribosomal subunits. Also involved in the hydrolysis of GTP during the formation of the 70S ribosomal complex. In Xylella fastidiosa (strain 9a5c), this protein is Translation initiation factor IF-2.